The sequence spans 29 residues: Kalata-B15 (29 aa).

Positions 1–29 (GLPVCGESCFGGSCYTPGCSCTWPICTRD) form a cross-link, cyclopeptide (Gly-Asp). 3 disulfide bridges follow: Cys-5–Cys-19, Cys-9–Cys-21, and Cys-14–Cys-26.

In terms of processing, this is a cyclic peptide.

Functionally, probably participates in a plant defense mechanism. This chain is Kalata-B15, found in Oldenlandia affinis.